We begin with the raw amino-acid sequence, 179 residues long: uncharacterized protein (179 aa).

This is an uncharacterized protein from Galliformes (FAdV-1).